A 173-amino-acid chain; its full sequence is Crossover junction endodeoxyribonuclease RuvC (173 aa).

Residues aspartate 8, glutamate 67, and aspartate 139 contribute to the active site. The Mg(2+) site is built by aspartate 8, glutamate 67, and aspartate 139.

The protein belongs to the RuvC family. In terms of assembly, homodimer which binds Holliday junction (HJ) DNA. The HJ becomes 2-fold symmetrical on binding to RuvC with unstacked arms; it has a different conformation from HJ DNA in complex with RuvA. In the full resolvosome a probable DNA-RuvA(4)-RuvB(12)-RuvC(2) complex forms which resolves the HJ. It depends on Mg(2+) as a cofactor.

It is found in the cytoplasm. It carries out the reaction Endonucleolytic cleavage at a junction such as a reciprocal single-stranded crossover between two homologous DNA duplexes (Holliday junction).. In terms of biological role, the RuvA-RuvB-RuvC complex processes Holliday junction (HJ) DNA during genetic recombination and DNA repair. Endonuclease that resolves HJ intermediates. Cleaves cruciform DNA by making single-stranded nicks across the HJ at symmetrical positions within the homologous arms, yielding a 5'-phosphate and a 3'-hydroxyl group; requires a central core of homology in the junction. The consensus cleavage sequence is 5'-(A/T)TT(C/G)-3'. Cleavage occurs on the 3'-side of the TT dinucleotide at the point of strand exchange. HJ branch migration catalyzed by RuvA-RuvB allows RuvC to scan DNA until it finds its consensus sequence, where it cleaves and resolves the cruciform DNA. This Vibrio atlanticus (strain LGP32) (Vibrio splendidus (strain Mel32)) protein is Crossover junction endodeoxyribonuclease RuvC.